Here is a 626-residue protein sequence, read N- to C-terminus: Protein MICRORCHIDIA 2 (626 aa).

Positions 579-626 form a coiled coil; it reads MRCEEYIKKENETEQTVKSLEKELEEFKSKCAHLALLVDAKKKEMQQA.

This sequence belongs to the MORC ATPase protein family. As to quaternary structure, homodimer and heterodimer with MORC6. Component of an RNA-directed DNA methylation (RdDM) complex that contains at least MORC6, MORC1/CRT1, MORC2, SWI3D and SUVH9. Binds directly to SUVH9. Mg(2+) serves as cofactor. It depends on Mn(2+) as a cofactor.

It is found in the nucleus. Its subcellular location is the endosome. Functionally, mediator of defense signaling triggered by distinct classes of R proteins. Required during hypersensitive response (HR) that confers disease resistance to turnip crinkle virus (TCV). Contributes to resistance against Pseudomonas syringae and Hyaloperonospora arabidopsidis, at early stages prior to cytosolic calcium ions Ca(2+) accumulation. Required for pathogen-associated molecular pattern (PAMP)-triggered immunity, basal resistance, non-host resistance and systemic acquired resistance (SAR). Involved in RNA-directed DNA methylation (RdDM) as a component of the RdDM machinery and required for gene silencing. May also be involved in the regulation of chromatin architecture to maintain gene silencing. Exhibits ATPase activity. The sequence is that of Protein MICRORCHIDIA 2 from Arabidopsis thaliana (Mouse-ear cress).